We begin with the raw amino-acid sequence, 1167 residues long: Kinesin-like protein KIN-14M (1167 aa).

Residues 93–130 form a disordered region; that stretch reads PRKENDPGTQNSEGRRKIPKNPAMSEPSSPLSQTTLSS. Positions 117 to 130 are enriched in low complexity; it reads SEPSSPLSQTTLSS. Coiled coils occupy residues 271–333, 366–398, and 432–489; these read VHQM…KEEM, AKYR…AMKS, and KQEL…ESRS. A Kinesin motor domain is found at 572–900; the sequence is NIRVHCRIRP…LKFADRVSGV (329 aa). 656 to 663 lines the ATP pocket; sequence GQTGSGKT. Residues 907–944 are a coiled coil; that stretch reads ANKEGKDIKEFKEQLSLLKDKIAKKDEEISRLQLQSHN. 2 disordered regions span residues 955 to 974 and 1083 to 1167; these read SLLK…SKIQ and PDQD…KRWT. Residues 958–972 show a composition bias toward low complexity; that stretch reads KHSSSSPGISSLGSK. 2 stretches are compositionally biased toward polar residues: residues 1113–1124 and 1151–1167; these read ASRTTTPKTPQS and TQAT…KRWT.

It belongs to the TRAFAC class myosin-kinesin ATPase superfamily. Kinesin family. KIN-14 subfamily.

The sequence is that of Kinesin-like protein KIN-14M from Oryza sativa subsp. japonica (Rice).